Reading from the N-terminus, the 457-residue chain is MKVNVIGAGLAGSEAAYFLANKGIKVRMFEMRPITSHFTSRQDEKTGTHDVRNATQTRPITTTEAHKTDKFGELVCSNTLGSFEITTGAGLLKKEMELLNSLVIKAAKHSYVKAGSALAVDRNEFSDFITKTILSHPNIEVVREEVESLNENELNIVATGPLTSEKFSKYLKNLITDDYLYFYDAIAPIVEASSVDFSKGFWGSRYDKGDDYFNCTMTKEEYDIFYNELLKAEKVPTKDFERVVHFEGCLPIEEIASRGYETLVFGPMSPKGLKHHISKDVYAIVQLRKETKEGEALSLVGFQTKLTYKEQVRVFRLIPCLRNAVFSRLGSMHRNTFLQSNKLLKPTLELRKNPNILFAGQITGVEGYSASAATGIIAGINAWLKLEGKEPTTPPKTTMLGALLDYISSKEGELQPMNPVFGLLPDIEVHKKHKKLLKAYRALFDMKKFIEHHKIYD.

7-12 (GAGLAG) lines the FAD pocket. Residues 38 to 58 (FTSRQDEKTGTHDVRNATQTR) are disordered. The segment covering 40–52 (SRQDEKTGTHDVR) has biased composition (basic and acidic residues).

Belongs to the MnmG family. TrmFO subfamily. The cofactor is FAD.

The protein resides in the cytoplasm. The enzyme catalyses uridine(54) in tRNA + (6R)-5,10-methylene-5,6,7,8-tetrahydrofolate + NADH + H(+) = 5-methyluridine(54) in tRNA + (6S)-5,6,7,8-tetrahydrofolate + NAD(+). The catalysed reaction is uridine(54) in tRNA + (6R)-5,10-methylene-5,6,7,8-tetrahydrofolate + NADPH + H(+) = 5-methyluridine(54) in tRNA + (6S)-5,6,7,8-tetrahydrofolate + NADP(+). Functionally, catalyzes the folate-dependent formation of 5-methyl-uridine at position 54 (M-5-U54) in all tRNAs. The sequence is that of Methylenetetrahydrofolate--tRNA-(uracil-5-)-methyltransferase TrmFO from Hydrogenobaculum sp. (strain Y04AAS1).